Here is a 142-residue protein sequence, read N- to C-terminus: Nucleoside diphosphate kinase (142 aa).

The ATP site is built by Lys11, Phe59, Arg87, Thr93, Arg104, and Asn114. The active-site Pros-phosphohistidine intermediate is His117.

Belongs to the NDK family. As to quaternary structure, homotetramer. It depends on Mg(2+) as a cofactor.

Its subcellular location is the cytoplasm. It catalyses the reaction a 2'-deoxyribonucleoside 5'-diphosphate + ATP = a 2'-deoxyribonucleoside 5'-triphosphate + ADP. The enzyme catalyses a ribonucleoside 5'-diphosphate + ATP = a ribonucleoside 5'-triphosphate + ADP. Its function is as follows. Major role in the synthesis of nucleoside triphosphates other than ATP. The ATP gamma phosphate is transferred to the NDP beta phosphate via a ping-pong mechanism, using a phosphorylated active-site intermediate. In Thiobacillus denitrificans (strain ATCC 25259 / T1), this protein is Nucleoside diphosphate kinase.